Here is a 68-residue protein sequence, read N- to C-terminus: Tabimmunregulin 1 (68 aa).

The signal sequence occupies residues 1 to 26 (MLLKSYVFFLLSLLIVGLFTSRDADA). Positions 27–38 (QYEDLVTGYLRK) are excised as a propeptide.

In terms of tissue distribution, expressed in salivary glands.

It localises to the secreted. Its function is as follows. Horsefly salivary gland immunosuppressant protein that likely inhibits the host inflammatory response by regulation of anti- and pro-inflammatory cytokines. When tested on mouse splenocytes in the presence of LPS, it increases the secretion of the proinflammatory cytokine interleukin-10 (IL10) and decreases the secretion of the proinflammatory cytokine interferon-gamma (IFNG) in a dose-dependent manner. The protein is Tabimmunregulin 1 of Tabanus yao (Horsefly).